The chain runs to 458 residues: tRNA modification GTPase MnmE (458 aa).

(6S)-5-formyl-5,6,7,8-tetrahydrofolate-binding residues include Arg-22, Glu-84, and Arg-123. Positions 220–379 (GIATAIIGRP…LEKAIADLFF (160 aa)) constitute a TrmE-type G domain. Asn-230 lines the K(+) pocket. Residues 230–235 (NVGKSS), 249–255 (TDIAGTT), and 274–277 (DTAG) contribute to the GTP site. Ser-234 provides a ligand contact to Mg(2+). Residues Thr-249, Ile-251, and Thr-254 each contribute to the K(+) site. A Mg(2+)-binding site is contributed by Thr-255. Lys-458 contributes to the (6S)-5-formyl-5,6,7,8-tetrahydrofolate binding site.

It belongs to the TRAFAC class TrmE-Era-EngA-EngB-Septin-like GTPase superfamily. TrmE GTPase family. As to quaternary structure, homodimer. Heterotetramer of two MnmE and two MnmG subunits. It depends on K(+) as a cofactor.

The protein resides in the cytoplasm. Exhibits a very high intrinsic GTPase hydrolysis rate. Involved in the addition of a carboxymethylaminomethyl (cmnm) group at the wobble position (U34) of certain tRNAs, forming tRNA-cmnm(5)s(2)U34. The chain is tRNA modification GTPase MnmE from Bacillus cytotoxicus (strain DSM 22905 / CIP 110041 / 391-98 / NVH 391-98).